We begin with the raw amino-acid sequence, 318 residues long: MIKKRNTTKISVIGAGSVGATTAYALMLSGVATEIVLVDVNKSKTEGEAMDLSHGADFVKPVNILSGDYKDTEGSDIVVITAGAAQKVGETRLQLINKNINIFKSIIPEVVKYNKDAILLVVSNPVDVLSYVTYKLSGFPKERVIGSGTVLDTSRLKHEIGKRYKIDPRNVNTYIMGEHGDSEIATWSVTNIQNIKIDEYANKENLEYNDNFRKEVYENVKNAAYEVINRKGATFYAIALAVTRIVKAILGDEKTILPVSTLVENYYGIKDVYLGMPCIVGGSGIEKALSIDLNKTEASKLVKSAETLKNTLNNASGL.

NAD(+)-binding positions include Val-18, Asp-39, Lys-44, Tyr-69, and 83-84 (GA). Residues Gln-86 and Arg-92 each contribute to the substrate site. NAD(+) is bound by residues Ser-105, 122 to 124 (VSN), and Ser-147. Residue 124 to 127 (NPVD) coordinates substrate. 152 to 155 (DTSR) is a binding site for substrate. The active-site Proton acceptor is His-179. Residue Tyr-225 is modified to Phosphotyrosine. Thr-234 serves as a coordination point for substrate.

The protein belongs to the LDH/MDH superfamily. LDH family. In terms of assembly, homotetramer.

The protein resides in the cytoplasm. The catalysed reaction is (S)-lactate + NAD(+) = pyruvate + NADH + H(+). It functions in the pathway fermentation; pyruvate fermentation to lactate; (S)-lactate from pyruvate: step 1/1. In terms of biological role, catalyzes the conversion of lactate to pyruvate. In Clostridium botulinum (strain Langeland / NCTC 10281 / Type F), this protein is L-lactate dehydrogenase.